A 175-amino-acid polypeptide reads, in one-letter code: Putative metal-dependent hydrolase BPUM_0784 (175 aa).

Zn(2+) contacts are provided by His-65, His-157, and His-161.

The protein belongs to the metal hydrolase YfiT family. In terms of assembly, homodimer. Requires Zn(2+) as cofactor.

Its subcellular location is the cytoplasm. Its function is as follows. Possible metal-dependent hydrolase. The sequence is that of Putative metal-dependent hydrolase BPUM_0784 from Bacillus pumilus (strain SAFR-032).